The chain runs to 215 residues: Redox-sensing transcriptional repressor Rex (215 aa).

A DNA-binding region (H-T-H motif) is located at residues 18–57 (LYYRFLKNLHASGKQRVSSAELSDAVKVDSATIRRDFSYF). 92 to 97 (GVGNLG) is a binding site for NAD(+).

This sequence belongs to the transcriptional regulatory Rex family. In terms of assembly, homodimer.

The protein resides in the cytoplasm. Its function is as follows. Modulates transcription in response to changes in cellular NADH/NAD(+) redox state. This chain is Redox-sensing transcriptional repressor Rex, found in Bacillus velezensis (strain DSM 23117 / BGSC 10A6 / LMG 26770 / FZB42) (Bacillus amyloliquefaciens subsp. plantarum).